Here is a 463-residue protein sequence, read N- to C-terminus: Glutamate--tRNA ligase 1 (463 aa).

Residues 10–20 carry the 'HIGH' region motif; the sequence is PSPTGYLHIGG. Residues 238-242 carry the 'KMSKS' region motif; the sequence is KLSKR. Lys-241 provides a ligand contact to ATP.

It belongs to the class-I aminoacyl-tRNA synthetase family. Glutamate--tRNA ligase type 1 subfamily. As to quaternary structure, monomer.

It localises to the cytoplasm. The enzyme catalyses tRNA(Glu) + L-glutamate + ATP = L-glutamyl-tRNA(Glu) + AMP + diphosphate. In terms of biological role, catalyzes the attachment of glutamate to tRNA(Glu) in a two-step reaction: glutamate is first activated by ATP to form Glu-AMP and then transferred to the acceptor end of tRNA(Glu). In Helicobacter pylori (strain Shi470), this protein is Glutamate--tRNA ligase 1.